A 319-amino-acid chain; its full sequence is Homoserine dehydrogenase (319 aa).

Residues Phe-10, Thr-12, Val-13, Arg-40, Lys-57, Ser-92, Ser-93, Ser-114, and Lys-116 each coordinate NADPH. Val-13 contributes to the NAD(+) binding site. NADP(+) is bound by residues Val-13 and Arg-40. Ser-92 provides a ligand contact to NAD(+). Ser-92 is a binding site for NADP(+). Positions 114 and 116 each coordinate NADP(+). Positions 140, 143, 145, and 147 each coordinate Na(+). Gly-197 and Glu-200 together coordinate NADP(+). Residues Glu-200 and Asp-211 each contribute to the L-homoserine site. Lys-215 acts as the Proton donor in catalysis. Gly-296 lines the NADPH pocket. Gly-296 contacts NAD(+). Residue Gly-296 coordinates NADP(+).

This sequence belongs to the homoserine dehydrogenase family. As to quaternary structure, homodimer. Requires a metal cation as cofactor.

It catalyses the reaction L-homoserine + NAD(+) = L-aspartate 4-semialdehyde + NADH + H(+). It participates in amino-acid biosynthesis; L-methionine biosynthesis via de novo pathway; L-homoserine from L-aspartate: step 3/3. Its pathway is amino-acid biosynthesis; L-threonine biosynthesis; L-threonine from L-aspartate: step 3/5. In terms of biological role, catalyzes the conversion of L-aspartate-beta-semialdehyde (L-Asa) to L-homoserine (L-Hse), the third step in the biosynthesis of threonine and methionine from aspartate. Utilizes NADH but not NADPH as coenzyme. The chain is Homoserine dehydrogenase from Pyrococcus horikoshii (strain ATCC 700860 / DSM 12428 / JCM 9974 / NBRC 100139 / OT-3).